A 339-amino-acid polypeptide reads, in one-letter code: MGNTVTCCVSPDSSPKEGRDREVTESGEPYQAQGEPQDGDVQHMSVWELPIDLSNERNPSDDAQTSTIFLCKSQTDVREKRKSNHINHISPGQLTKKYSSCSTIFLDDSTVSQPNLRSTIKCVTLAIYYHIKNRDSDRSLDIFDEKLHPITREEVAHDYCKHDPDHKHIYRFVRTLFSAAQLTAECAIVTLVYLERLLTYAEIDICPSNWKQIVLGAILLSSKVWDDQAVWNVDYCQIMKDITVEDMNEMERHFLELLQFNINVTASVYAKYYFDLRSLADDNNLHFLLEPLSNERAQKLEAISRLCEDKYKDLSKAAMRRSISADNLVGIRRSNAIIS.

A compositionally biased stretch (polar residues) spans 1-13 (MGNTVTCCVSPDS). A disordered region spans residues 1 to 42 (MGNTVTCCVSPDSSPKEGRDREVTESGEPYQAQGEPQDGDVQ). Positions 14–24 (SPKEGRDREVT) are enriched in basic and acidic residues. The Cyclin N-terminal domain maps to 141-263 (DIFDEKLHPI…FLELLQFNIN (123 aa)).

Belongs to the cyclin family. Cyclin Y subfamily.

The sequence is that of Cyclin-Y-like protein 1-A (ccnyl1-a) from Xenopus laevis (African clawed frog).